A 254-amino-acid polypeptide reads, in one-letter code: Ribosomal RNA small subunit methyltransferase J (254 aa).

Residues Arg-107–Asp-108, Glu-123–Arg-124, and Asp-174 each bind S-adenosyl-L-methionine.

Belongs to the methyltransferase superfamily. RsmJ family.

It localises to the cytoplasm. The catalysed reaction is guanosine(1516) in 16S rRNA + S-adenosyl-L-methionine = N(2)-methylguanosine(1516) in 16S rRNA + S-adenosyl-L-homocysteine + H(+). In terms of biological role, specifically methylates the guanosine in position 1516 of 16S rRNA. The polypeptide is Ribosomal RNA small subunit methyltransferase J (Coxiella burnetii (strain Dugway 5J108-111)).